The following is a 210-amino-acid chain: Pyrrolidone-carboxylate peptidase (210 aa).

Catalysis depends on residues Glu-80, Cys-143, and His-162.

This sequence belongs to the peptidase C15 family. As to quaternary structure, homotetramer.

The protein localises to the cytoplasm. It carries out the reaction Release of an N-terminal pyroglutamyl group from a polypeptide, the second amino acid generally not being Pro.. Removes 5-oxoproline from various penultimate amino acid residues except L-proline. This Chromobacterium violaceum (strain ATCC 12472 / DSM 30191 / JCM 1249 / CCUG 213 / NBRC 12614 / NCIMB 9131 / NCTC 9757 / MK) protein is Pyrrolidone-carboxylate peptidase.